Consider the following 156-residue polypeptide: Ribosomal RNA large subunit methyltransferase H (156 aa).

S-adenosyl-L-methionine contacts are provided by residues leucine 73, glycine 104, and leucine 123 to leucine 128.

It belongs to the RNA methyltransferase RlmH family. Homodimer.

Its subcellular location is the cytoplasm. The catalysed reaction is pseudouridine(1915) in 23S rRNA + S-adenosyl-L-methionine = N(3)-methylpseudouridine(1915) in 23S rRNA + S-adenosyl-L-homocysteine + H(+). Its function is as follows. Specifically methylates the pseudouridine at position 1915 (m3Psi1915) in 23S rRNA. This is Ribosomal RNA large subunit methyltransferase H from Edwardsiella ictaluri (strain 93-146).